The sequence spans 1004 residues: 2-oxoglutarate dehydrogenase E1 component (1004 aa).

The protein belongs to the alpha-ketoglutarate dehydrogenase family. In terms of assembly, homodimer. Part of the 2-oxoglutarate dehydrogenase (OGDH) complex composed of E1 (2-oxoglutarate dehydrogenase), E2 (dihydrolipoamide succinyltransferase) and E3 (dihydrolipoamide dehydrogenase); the complex contains multiple copies of the three enzymatic components (E1, E2 and E3). The cofactor is thiamine diphosphate.

The enzyme catalyses N(6)-[(R)-lipoyl]-L-lysyl-[protein] + 2-oxoglutarate + H(+) = N(6)-[(R)-S(8)-succinyldihydrolipoyl]-L-lysyl-[protein] + CO2. In terms of biological role, E1 component of the 2-oxoglutarate dehydrogenase (OGDH) complex which catalyzes the decarboxylation of 2-oxoglutarate, the first step in the conversion of 2-oxoglutarate to succinyl-CoA and CO(2). This is 2-oxoglutarate dehydrogenase E1 component from Brucella canis (strain ATCC 23365 / NCTC 10854 / RM-666).